The chain runs to 282 residues: Probable endonuclease 4 (282 aa).

The Zn(2+) site is built by histidine 69, histidine 109, glutamate 145, aspartate 179, histidine 182, histidine 216, aspartate 229, histidine 231, and glutamate 261.

Belongs to the AP endonuclease 2 family. It depends on Zn(2+) as a cofactor.

The catalysed reaction is Endonucleolytic cleavage to 5'-phosphooligonucleotide end-products.. Its function is as follows. Endonuclease IV plays a role in DNA repair. It cleaves phosphodiester bonds at apurinic or apyrimidinic (AP) sites, generating a 3'-hydroxyl group and a 5'-terminal sugar phosphate. The polypeptide is Probable endonuclease 4 (Campylobacter fetus subsp. fetus (strain 82-40)).